We begin with the raw amino-acid sequence, 379 residues long: Wnt inhibitory factor 1 (379 aa).

The first 28 residues, 1–28 (MARRRAFPAFALRLWSILPCLLLLRADA), serve as a signal peptide directing secretion. Residues 38 to 177 (LWIDAHQARV…PQNAIFFKTC (140 aa)) enclose the WIF domain. A glycan (N-linked (GlcNAc...) asparagine) is linked at N88. Intrachain disulfides connect C140-C177, C182-C192, C186-C198, C200-C209, C214-C224, C218-C230, and C232-C241. 5 EGF-like domains span residues 178 to 210 (QQAECPGGCRNGGFCNERRVCECPDGFYGPHCE), 211 to 242 (KALCIPRCMNGGLCVTPGFCICPPGFYGVNCD), 243 to 271 (KANCSTTCFNGGTCFYPGKCICPPGLEGE), 274 to 306 (ELSKCPQPCRNGGKCIGKSKCKCPKGYQGDLCS), and 307 to 338 (KPVCEPGCGAHGTCHEPNKCQCREGWHGRHCN). The N-linked (GlcNAc...) asparagine glycan is linked to N245. Disulfide bonds link C246/C256, C250/C262, C278/C288, C282/C294, C296/C305, C310/C320, C314/C326, and C328/C337. Positions 348 to 379 (APRPAGAGLERHTPSLKKAEDRRDPPESNYIW) are disordered. The span at 356–373 (LERHTPSLKKAEDRRDPP) shows a compositional bias: basic and acidic residues.

As to quaternary structure, interacts with MYOC. In terms of tissue distribution, expression highest in heart and lung. Lower in brain and eye.

The protein localises to the secreted. Binds to WNT proteins and inhibits their activities. May be involved in mesoderm segmentation. The sequence is that of Wnt inhibitory factor 1 (Wif1) from Mus musculus (Mouse).